The primary structure comprises 964 residues: Translation initiation factor IF-2 (964 aa).

Positions 35 to 353 (ASSTIEPPVV…RQKRNEYESM (319 aa)) are disordered. Residues 64–108 (KPTPAKPAAKPGAPAPKPGTAQKPTAPTPGAVAAPKPGTAAAKPT) show a composition bias toward low complexity. Residues 124–133 (PAKPTAPKPA) show a composition bias toward pro residues. Over residues 145 to 155 (AAKKAAEDKAT) the composition is skewed to basic and acidic residues. The segment covering 166 to 178 (NAMPRPMAKPGPK) has biased composition (pro residues). Positions 220 to 233 (PRPQGGQRSGAPRD) are enriched in low complexity. Composition is skewed to gly residues over residues 234-252 (GQGGPRGQRPGPGSGGPRP) and 290-333 (GKGG…GRPG). The segment covering 337–346 (RRGRKSKRQK) has biased composition (basic residues). Residues 459–631 (KRPPVVTVMG…VCLTADAELD (173 aa)) form the tr-type G domain. Positions 468 to 475 (GHVDHGKT) are G1. Residue 468–475 (GHVDHGKT) participates in GTP binding. A G2 region spans residues 493–497 (GITQG). Residues 518–521 (DTPG) form a G3 region. GTP contacts are provided by residues 518–522 (DTPGH) and 572–575 (NKID). The interval 572-575 (NKID) is G4. The G5 stretch occupies residues 608-610 (SAK).

Belongs to the TRAFAC class translation factor GTPase superfamily. Classic translation factor GTPase family. IF-2 subfamily.

It localises to the cytoplasm. Its function is as follows. One of the essential components for the initiation of protein synthesis. Protects formylmethionyl-tRNA from spontaneous hydrolysis and promotes its binding to the 30S ribosomal subunits. Also involved in the hydrolysis of GTP during the formation of the 70S ribosomal complex. The chain is Translation initiation factor IF-2 from Corynebacterium efficiens (strain DSM 44549 / YS-314 / AJ 12310 / JCM 11189 / NBRC 100395).